The sequence spans 599 residues: Phosphomethylpyrimidine synthase (599 aa).

Residues methionine 1–glutamate 16 show a composition bias toward polar residues. 2 disordered regions span residues methionine 1 to proline 53 and glutamate 82 to serine 108. The segment covering tyrosine 87–serine 100 has biased composition (basic and acidic residues). Substrate is bound by residues asparagine 192, methionine 221, tyrosine 250, histidine 286, serine 306–glycine 308, aspartate 347–arginine 350, and glutamate 386. A Zn(2+)-binding site is contributed by histidine 390. Position 413 (tyrosine 413) interacts with substrate. A Zn(2+)-binding site is contributed by histidine 454. The [4Fe-4S] cluster site is built by cysteine 534, cysteine 537, and cysteine 542.

This sequence belongs to the ThiC family. The cofactor is [4Fe-4S] cluster.

It carries out the reaction 5-amino-1-(5-phospho-beta-D-ribosyl)imidazole + S-adenosyl-L-methionine = 4-amino-2-methyl-5-(phosphooxymethyl)pyrimidine + CO + 5'-deoxyadenosine + formate + L-methionine + 3 H(+). Its pathway is cofactor biosynthesis; thiamine diphosphate biosynthesis. In terms of biological role, catalyzes the synthesis of the hydroxymethylpyrimidine phosphate (HMP-P) moiety of thiamine from aminoimidazole ribotide (AIR) in a radical S-adenosyl-L-methionine (SAM)-dependent reaction. The sequence is that of Phosphomethylpyrimidine synthase from Corynebacterium diphtheriae (strain ATCC 700971 / NCTC 13129 / Biotype gravis).